Consider the following 490-residue polypeptide: Delta(14)-sterol reductase (490 aa).

A run of 7 helical transmembrane segments spans residues Phe-23–Phe-43, Val-80–Leu-100, Leu-136–Ile-156, Phe-160–Val-180, Glu-230–Ala-250, Leu-255–Phe-275, and Gln-324–Phe-344. NADP(+) contacts are provided by residues Lys-351, Arg-355, Ile-378, Trp-383, and Asn-390 to Tyr-391. Residues Ala-436–Ile-456 form a helical membrane-spanning segment. Residues Asp-462, Cys-466–Tyr-470, and Tyr-477 contribute to the NADP(+) site.

Belongs to the ERG4/ERG24 family.

It localises to the membrane. It catalyses the reaction 4,4-dimethyl-5alpha-cholesta-8,24-dien-3beta-ol + NADP(+) = 4,4-dimethyl-5alpha-cholesta-8,14,24-trien-3beta-ol + NADPH + H(+). It functions in the pathway steroid biosynthesis; zymosterol biosynthesis; zymosterol from lanosterol: step 2/6. Functionally, reduces the C14=C15 double bond of 4,4-dimethyl-cholesta-8,14,24-trienol to produce 4,4-dimethyl-cholesta-8,24-dienol. This Neurospora crassa (strain ATCC 24698 / 74-OR23-1A / CBS 708.71 / DSM 1257 / FGSC 987) protein is Delta(14)-sterol reductase (erg-3).